Reading from the N-terminus, the 156-residue chain is Small ribosomal subunit protein uS7 (156 aa).

It belongs to the universal ribosomal protein uS7 family. As to quaternary structure, part of the 30S ribosomal subunit. Contacts proteins S9 and S11.

One of the primary rRNA binding proteins, it binds directly to 16S rRNA where it nucleates assembly of the head domain of the 30S subunit. Is located at the subunit interface close to the decoding center, probably blocks exit of the E-site tRNA. This Kineococcus radiotolerans (strain ATCC BAA-149 / DSM 14245 / SRS30216) protein is Small ribosomal subunit protein uS7.